Consider the following 221-residue polypeptide: Uracil-DNA glycosylase (221 aa).

Catalysis depends on Asp-65, which acts as the Proton acceptor.

Belongs to the uracil-DNA glycosylase (UDG) superfamily. UNG family.

Its subcellular location is the cytoplasm. The enzyme catalyses Hydrolyzes single-stranded DNA or mismatched double-stranded DNA and polynucleotides, releasing free uracil.. Its function is as follows. Excises uracil residues from the DNA which can arise as a result of misincorporation of dUMP residues by DNA polymerase or due to deamination of cytosine. This chain is Uracil-DNA glycosylase, found in Flavobacterium johnsoniae (strain ATCC 17061 / DSM 2064 / JCM 8514 / BCRC 14874 / CCUG 350202 / NBRC 14942 / NCIMB 11054 / UW101) (Cytophaga johnsonae).